The chain runs to 633 residues: MEKYDYSELGLKAGLEIHQQLDSKEKLFCRCPTLIRDIGDSDFEFFRYLRATESEMGEKDRAAVEQTKIRRKYIYKAYDTTCLIENDEEPPRELNKEALDISLGVSKLFNMKPVDQMHVMRKIVVDGSNTSGFQRTAFLASDGYIETSEGRCGIDSLCVEEEAAQKIEEKGDSIVYSLDRLGIPLVEIATAPDIRSPRHAREVAEYIGMVLRSTGKVKRGLGTIRQDVNISIARGERVEIKGVQALDLIEDIVRREVERQLNLLFIRQELLERKAFVCEEIYDVTGLFMDTKSKVLQKGVKKGSILAALLKKFNRLVGKEVQPGRRLGTEFSDRAKTAGVGGLFHTDELPNYGITEKEVQAVKDAIGAGPEDAFVMVADEPEKARLAIEAVINRAKEAIEGIPEETRKALPDGNTAYMRPLPGAARMYPETDVPQIEISQEYFDSIKPPELLTKRAKRFASESGLNKELAEKVAYSRYLPLFEILLETYTKDANVNSTLIARTLVGIVPEIRRNGVETDNLTDEHFKGLFAAISNQEIAKEAIQDLLTALAKEPELTVQEAISKLGLSAFDPEEVENFIKQMVMEKGDFIKDKGPSALGPLMGIVMKEYRGTVDGKILSHMLKKEIDNFIGQG.

Belongs to the GatB/GatE family. GatE subfamily. Heterodimer of GatD and GatE.

It catalyses the reaction L-glutamyl-tRNA(Gln) + L-glutamine + ATP + H2O = L-glutaminyl-tRNA(Gln) + L-glutamate + ADP + phosphate + H(+). Its function is as follows. Allows the formation of correctly charged Gln-tRNA(Gln) through the transamidation of misacylated Glu-tRNA(Gln) in organisms which lack glutaminyl-tRNA synthetase. The reaction takes place in the presence of glutamine and ATP through an activated gamma-phospho-Glu-tRNA(Gln). The GatDE system is specific for glutamate and does not act on aspartate. The sequence is that of Glutamyl-tRNA(Gln) amidotransferase subunit E from Methanosarcina acetivorans (strain ATCC 35395 / DSM 2834 / JCM 12185 / C2A).